The following is a 64-amino-acid chain: Large ribosomal subunit protein bL35 (64 aa).

A compositionally biased stretch (basic residues) spans 1-15 (MPKQKSHSGASKRFR). The segment at 1 to 22 (MPKQKSHSGASKRFRVTGSGKV) is disordered.

It belongs to the bacterial ribosomal protein bL35 family.

The sequence is that of Large ribosomal subunit protein bL35 from Frankia casuarinae (strain DSM 45818 / CECT 9043 / HFP020203 / CcI3).